The following is a 284-amino-acid chain: RNase adapter protein RapZ (284 aa).

Position 8–15 (8–15 (GRSGSGKS)) interacts with ATP. 56 to 59 (DVRN) is a GTP binding site. The interval 266–284 (RSRGKNVQSRHRTLEKRKP) is RNA-binding.

Belongs to the RapZ-like family. RapZ subfamily. Homotrimer.

Functionally, modulates the synthesis of GlmS, by affecting the processing and stability of the regulatory small RNA GlmZ. When glucosamine-6-phosphate (GlcN6P) concentrations are high in the cell, RapZ binds GlmZ and targets it to cleavage by RNase E. Consequently, GlmZ is inactivated and unable to activate GlmS synthesis. Under low GlcN6P concentrations, RapZ is sequestered and inactivated by an other regulatory small RNA, GlmY, preventing GlmZ degradation and leading to synthesis of GlmS. This chain is RNase adapter protein RapZ, found in Shigella boydii serotype 18 (strain CDC 3083-94 / BS512).